Reading from the N-terminus, the 219-residue chain is Small ribosomal subunit protein uS3 (219 aa).

The region spanning 39–108 (IKEFIKKNYF…KVTVKVQEIK (70 aa)) is the KH type-2 domain.

The protein belongs to the universal ribosomal protein uS3 family. Part of the 30S ribosomal subunit. Forms a tight complex with proteins S10 and S14.

Binds the lower part of the 30S subunit head. Binds mRNA in the 70S ribosome, positioning it for translation. The sequence is that of Small ribosomal subunit protein uS3 from Fusobacterium nucleatum subsp. nucleatum (strain ATCC 25586 / DSM 15643 / BCRC 10681 / CIP 101130 / JCM 8532 / KCTC 2640 / LMG 13131 / VPI 4355).